Reading from the N-terminus, the 127-residue chain is uncharacterized protein (127 aa).

A helical membrane pass occupies residues 85-107; sequence VYLGKIGFVLLHVFYLSCIAYYD.

The protein localises to the mitochondrion membrane. This is an uncharacterized protein from Dictyostelium discoideum (Social amoeba).